We begin with the raw amino-acid sequence, 644 residues long: Exoribonuclease 2 (644 aa).

The RNB domain maps to 189–516 (REDLTALNFV…NHRLLKAIIT (328 aa)). Residues 561–643 (DTRFPAEIID…ETRNVVARPV (83 aa)) enclose the S1 motif domain.

The protein belongs to the RNR ribonuclease family. RNase II subfamily.

Its subcellular location is the cytoplasm. It carries out the reaction Exonucleolytic cleavage in the 3'- to 5'-direction to yield nucleoside 5'-phosphates.. Involved in mRNA degradation. Hydrolyzes single-stranded polyribonucleotides processively in the 3' to 5' direction. The protein is Exoribonuclease 2 of Yersinia enterocolitica serotype O:8 / biotype 1B (strain NCTC 13174 / 8081).